The following is a 251-amino-acid chain: Triosephosphate isomerase (251 aa).

9–11 is a binding site for substrate; it reads NWK. His-96 (electrophile) is an active-site residue. Residue Glu-166 is the Proton acceptor of the active site. Residues Gly-172, Ser-212, and 233–234 each bind substrate; that span reads GG.

This sequence belongs to the triosephosphate isomerase family. In terms of assembly, homodimer.

It localises to the cytoplasm. It carries out the reaction D-glyceraldehyde 3-phosphate = dihydroxyacetone phosphate. Its pathway is carbohydrate biosynthesis; gluconeogenesis. It participates in carbohydrate degradation; glycolysis; D-glyceraldehyde 3-phosphate from glycerone phosphate: step 1/1. Its function is as follows. Involved in the gluconeogenesis. Catalyzes stereospecifically the conversion of dihydroxyacetone phosphate (DHAP) to D-glyceraldehyde-3-phosphate (G3P). This chain is Triosephosphate isomerase, found in Pelodictyon phaeoclathratiforme (strain DSM 5477 / BU-1).